The chain runs to 184 residues: Spiro-conjugate synthase (184 aa).

Cys-57 and Cys-184 are oxidised to a cystine. Gln-115 contacts (1S,3R,6R,8R,9R,11R,14S,15S,19R,20R)-8-ethyl-9,15-dihydroxy-3,4,6,20-tetramethyl-21,23-dioxo-24-azapentacyclo[20.2.1.0(1,6).0(11,20).0(14,19)]pentacosa-4,12,22(25)-trien-25-olate.

Homodimer.

The catalysed reaction is 4-[(1R,2R,4aS,5S,8aR)-2-[(2R,3R,5E,7E)-3-ethyl-2-hydroxy-5,7-dimethylnona-5,7-dien-1-yl]-5-hydroxy-1-methyl-1,2,4a,5,6,7,8,8a-octahydronaphthalene-1-carbonyl]-2-methylidene-5-oxo-2,5-dihydro-1H-pyrrol-3-olate = (1S,3R,6R,8R,9R,11R,14S,15S,19R,20R)-8-ethyl-9,15-dihydroxy-3,4,6,20-tetramethyl-21,23-dioxo-24-azapentacyclo[20.2.1.0(1,6).0(11,20).0(14,19)]pentacosa-4,12,22(25)-trien-25-olate. The protein operates within antibiotic biosynthesis. Involved in the biosynthesis of the spirotetramate antibiotics pyrroindomycins. Catalyzes the intramolecular cyclization forming the spiro-conjugate moiety in pyrroindomycins, via an exo-selective [4+2] cycloaddition reaction. In Streptomyces rugosporus, this protein is Spiro-conjugate synthase.